Reading from the N-terminus, the 439-residue chain is CBL-interacting serine/threonine-protein kinase 26 (439 aa).

In terms of domain architecture, Protein kinase spans Y13–F268. Residues L19–V27 and K42 contribute to the ATP site. The active-site Proton acceptor is D136. An activation loop region spans residues D154 to E183. The residue at position 158 (S158) is a Phosphoserine. The residue at position 172 (T172) is a Phosphothreonine. The region spanning E306–E330 is the NAF domain. The PPI stretch occupies residues K336 to I365.

The protein belongs to the protein kinase superfamily. CAMK Ser/Thr protein kinase family. SNF1 subfamily. In terms of assembly, interacts with RBOHF (via N-terminus). Mn(2+) is required as a cofactor.

The protein resides in the cell membrane. The enzyme catalyses L-seryl-[protein] + ATP = O-phospho-L-seryl-[protein] + ADP + H(+). It catalyses the reaction L-threonyl-[protein] + ATP = O-phospho-L-threonyl-[protein] + ADP + H(+). Functionally, CIPK serine-threonine protein kinases interact with CBL proteins. Binding of a CBL protein to the regulatory NAF domain of CIPK protein lead to the activation of the kinase in a calcium-dependent manner. Involved in the calcium-dependent regulation of reactive oxygen species production by the NADPH oxidase RBOHF. The chain is CBL-interacting serine/threonine-protein kinase 26 (CIPK26) from Arabidopsis thaliana (Mouse-ear cress).